The primary structure comprises 113 residues: U11-theraphotoxin-Hhn1l (113 aa).

The signal sequence occupies residues 1 to 21; the sequence is MNTGRVTFLVVFLVAVSLGPA. Positions 22–74 are excised as a propeptide; that stretch reads DKEENPMEMQEKTQQGKNYLNFGENLVVPKLEELKAKLVEKESKKSKNSRQKR. Disulfide bonds link cysteine 82–cysteine 95 and cysteine 89–cysteine 110.

The protein belongs to the neurotoxin 14 (magi-1) family. 01 (HNTX-16) subfamily. Expressed by the venom gland.

The protein localises to the secreted. Probable ion channel inhibitor. The chain is U11-theraphotoxin-Hhn1l from Cyriopagopus hainanus (Chinese bird spider).